A 231-amino-acid chain; its full sequence is MRLVIARCSVDYVGRLKAHLPLATRLLLVKADGSVLVHSDGGSYKPLNWMSPPASLRVSTPDEVDLELGVTEQWTVQSAKTDDRLIINIHEQLHDTSHELGQDPGLIKDGVEADLQRLLADQIERLGTGFSLIRREYFTAIGPVDILARDADGATVAIELKRRGDIDGVEQLTRYLELLNRDPLLAPVRGIFAAQQIKPQAKVLANDRGIDCVTLDYDAMRGVDDSESRLF.

It belongs to the NucS endonuclease family.

The protein resides in the cytoplasm. Cleaves both 3' and 5' ssDNA extremities of branched DNA structures. This chain is Endonuclease NucS, found in Arthrobacter sp. (strain FB24).